Reading from the N-terminus, the 336-residue chain is Tetraacyldisaccharide 4'-kinase (336 aa).

Residue 58 to 65 (AVGGSGKT) participates in ATP binding.

It belongs to the LpxK family.

The enzyme catalyses a lipid A disaccharide + ATP = a lipid IVA + ADP + H(+). It functions in the pathway glycolipid biosynthesis; lipid IV(A) biosynthesis; lipid IV(A) from (3R)-3-hydroxytetradecanoyl-[acyl-carrier-protein] and UDP-N-acetyl-alpha-D-glucosamine: step 6/6. Its function is as follows. Transfers the gamma-phosphate of ATP to the 4'-position of a tetraacyldisaccharide 1-phosphate intermediate (termed DS-1-P) to form tetraacyldisaccharide 1,4'-bis-phosphate (lipid IVA). The sequence is that of Tetraacyldisaccharide 4'-kinase from Aromatoleum aromaticum (strain DSM 19018 / LMG 30748 / EbN1) (Azoarcus sp. (strain EbN1)).